The chain runs to 157 residues: Large ribosomal subunit protein uL15 (157 aa).

Residues 1–64 (MKLNEIPAVP…MPLQRRLPKR (64 aa)) form a disordered region. Over residues 21–31 (RGPGSGNGKTA) the composition is skewed to gly residues.

Belongs to the universal ribosomal protein uL15 family. In terms of assembly, part of the 50S ribosomal subunit.

Functionally, binds to the 23S rRNA. This Magnetococcus marinus (strain ATCC BAA-1437 / JCM 17883 / MC-1) protein is Large ribosomal subunit protein uL15.